The sequence spans 955 residues: 2-oxoglutarate dehydrogenase E1 component (955 aa).

The protein belongs to the alpha-ketoglutarate dehydrogenase family. As to quaternary structure, homodimer. Part of the 2-oxoglutarate dehydrogenase (OGDH) complex composed of E1 (2-oxoglutarate dehydrogenase), E2 (dihydrolipoamide succinyltransferase) and E3 (dihydrolipoamide dehydrogenase); the complex contains multiple copies of the three enzymatic components (E1, E2 and E3). It depends on thiamine diphosphate as a cofactor.

It catalyses the reaction N(6)-[(R)-lipoyl]-L-lysyl-[protein] + 2-oxoglutarate + H(+) = N(6)-[(R)-S(8)-succinyldihydrolipoyl]-L-lysyl-[protein] + CO2. Functionally, E1 component of the 2-oxoglutarate dehydrogenase (OGDH) complex which catalyzes the decarboxylation of 2-oxoglutarate, the first step in the conversion of 2-oxoglutarate to succinyl-CoA and CO(2). The protein is 2-oxoglutarate dehydrogenase E1 component of Bacillus anthracis (strain A0248).